A 170-amino-acid polypeptide reads, in one-letter code: Putative pre-16S rRNA nuclease (170 aa).

This sequence belongs to the YqgF nuclease family.

It is found in the cytoplasm. Its function is as follows. Could be a nuclease involved in processing of the 5'-end of pre-16S rRNA. This Synechococcus sp. (strain JA-2-3B'a(2-13)) (Cyanobacteria bacterium Yellowstone B-Prime) protein is Putative pre-16S rRNA nuclease.